We begin with the raw amino-acid sequence, 230 residues long: MCGNNMSAPMPAVVPAARKATAAVIFLHGLGDTGHGWAEAFAGIKSPHIKYICPHAPVMPVTLNMNMAMPSWFDIVGLSPDSQEDESGIKQAAETVKALIDQEVKNGIPSNRIILGGFSQGGALSLYTALTTQQKLAGVTALSCWLPLRASFSQGPINSANRDISVLQCHGDCDPLVPLMFGSLTVERLKALINPANVTFKIYEGMMHSSCQQEMMDVKHFIDKLLPPID.

Active-site charge relay system residues include Ser-119, Asp-174, and His-208. The residue at position 224 (Lys-224) is an N6-acetyllysine.

This sequence belongs to the AB hydrolase superfamily. AB hydrolase 2 family. Homodimer.

The protein localises to the cytoplasm. It is found in the cell membrane. The protein resides in the nucleus membrane. It localises to the endoplasmic reticulum. The catalysed reaction is S-hexadecanoyl-L-cysteinyl-[protein] + H2O = L-cysteinyl-[protein] + hexadecanoate + H(+). It catalyses the reaction 1-hexadecanoyl-sn-glycero-3-phosphocholine + H2O = sn-glycerol 3-phosphocholine + hexadecanoate + H(+). The enzyme catalyses a 1-(9Z-octadecenoyl)-2-acyl-sn-glycero-3-phosphocholine + H2O = a 2-acyl-sn-glycero-3-phosphocholine + (9Z)-octadecenoate + H(+). In terms of biological role, acts as an acyl-protein thioesterase. Hydrolyzes fatty acids from S-acylated cysteine residues in proteins such as trimeric G alpha proteins or HRAS. Acts as a palmitoyl thioesterase that catalyzes depalmitoylation of proteins, such as ADRB2, KCNMA1 and SQSTM1. Acts as a negative regulator of autophagy by mediating palmitoylation of SQSTM1, decreasing affinity between SQSTM1 and ATG8 proteins and recruitment of ubiquitinated cargo proteins to autophagosomes. Acts as a lysophospholipase and hydrolyzes lysophosphatidylcholine (lyso-PC). Also hydrolyzes lysophosphatidylethanolamine (lyso-PE), lysophosphatidylinositol (lyso-PI) and lysophosphatidylserine (lyso-PS). Has much higher thioesterase activity than lysophospholipase activity. Contributes to the production of lysophosphatidic acid (LPA) during blood coagulation by recognizing and cleaving plasma phospholipids to generate lysophospholipids which in turn act as substrates for ENPP2 to produce LPA. This is Acyl-protein thioesterase 1 (Lypla1) from Mus musculus (Mouse).